The sequence spans 72 residues: uncharacterized protein (72 aa).

Belongs to the ycf76 family.

It is found in the plastid. The protein localises to the chloroplast. This is an uncharacterized protein from Oryza nivara (Indian wild rice).